We begin with the raw amino-acid sequence, 295 residues long: Probable phosphoglycerate mutase PMU1 (295 aa).

Histidine 61 acts as the Tele-phosphohistidine intermediate in catalysis. Glutamate 170 (proton donor/acceptor) is an active-site residue.

Belongs to the phosphoglycerate mutase family.

The protein localises to the cytoplasm. The protein resides in the nucleus. Its function is as follows. Probable phosphomutase that may have a function related to the manipulation of phosphate groups on carbohydrates. Reduces trehalose-6-phosphate levels when overexpressed in TPS2-deleted cells. Reduces 5'-Phosphoribosyl-4-carboxamide-5-aminoimidazole (AICAR) levels, a metabolic intermediate at the crossroads between AMP and histidine biosynthesis pathways, when overexpressed in a ADE3-ADE16-ADE17 triple deletant. The sequence is that of Probable phosphoglycerate mutase PMU1 from Saccharomyces cerevisiae (strain ATCC 204508 / S288c) (Baker's yeast).